Reading from the N-terminus, the 68-residue chain is Large ribosomal subunit protein bL35 (68 aa).

The protein belongs to the bacterial ribosomal protein bL35 family.

In Rickettsia canadensis (strain McKiel), this protein is Large ribosomal subunit protein bL35.